The chain runs to 280 residues: Nuclear egress protein 1 (280 aa).

The CCCH-type zinc finger occupies 86-203 (CLTLSPYGHS…YIIFTSLTLH (118 aa)).

This sequence belongs to the herpesviridae NEC1 protein family. Forms a heterohexameric complex with NEC2. Interacts with capsid vertex specific component 2/CVC2; this interaction directs the capsid to the host inner nuclear membrane to initiate budding. Post-translationally, phosphorylated at serine residues in the N-terminus. This phosphorylation regulates the localization within the inner nuclear membrane.

It is found in the host nucleus inner membrane. Functionally, plays an essential role in virion nuclear egress, the first step of virion release from infected cell. Within the host nucleus, NEC1 interacts with the newly formed capsid through the vertexes and directs it to the inner nuclear membrane by associating with NEC2. Induces the budding of the capsid at the inner nuclear membrane as well as its envelopment into the perinuclear space. There, the NEC1/NEC2 complex promotes the fusion of the enveloped capsid with the outer nuclear membrane and the subsequent release of the viral capsid into the cytoplasm where it will reach the secondary budding sites in the host Golgi or trans-Golgi network. The polypeptide is Nuclear egress protein 1 (Alcelaphine herpesvirus 1 (strain C500) (AlHV-1)).